A 317-amino-acid polypeptide reads, in one-letter code: Zinc transporter ZIP3 (317 aa).

Topologically, residues 1 to 3 (MSQ) are extracellular. Residues 4 to 24 (LLVAKVLCMVGVFFFMLLGSL) form a helical membrane-spanning segment. Topologically, residues 25 to 42 (LPVKVIEADFEKAHRSKK) are cytoplasmic. A helical transmembrane segment spans residues 43–63 (VLSLCNTFGGGVFLATCFNAL). The Extracellular segment spans residues 64 to 85 (LPAVRDKLQQVLSLGHISTDYP). Residues 86–106 (LAETLMMVGFFLTVFVEQLVL) traverse the membrane as a helical segment. Residues 107 to 172 (TFRRERPPFI…RELGRPGPLR (66 aa)) lie on the Cytoplasmic side of the membrane. 2 positions are modified to phosphoserine: Ser125 and Ser129. A helical transmembrane segment spans residues 173–193 (LLSLVFALSAHSVFEGLALGL). Over 194–199 (QEEGER) the chain is Extracellular. The helical transmembrane segment at 200–220 (VVSLFVGVAVHETLVAVALGI) threads the bilayer. At 221 to 232 (SMARSAVPLRDA) the chain is on the cytoplasmic side. The helical transmembrane segment at 233-253 (AKLAVTVSAMIPVGIGLGLGI) threads the bilayer. At 254-265 (ESARSVASSVAS) the chain is on the extracellular side. Residues 266-286 (ALLQGLAGGTFLFVTFLEILA) traverse the membrane as a helical segment. Residues 287–294 (KELEERSE) are Cytoplasmic-facing. Residues 295–315 (QLLKVLFLVLGYAVLAGMVFL) form a helical membrane-spanning segment. Residues 316–317 (KW) lie on the Extracellular side of the membrane.

Belongs to the ZIP transporter (TC 2.A.5) family.

Its subcellular location is the cell membrane. The protein localises to the apical cell membrane. The enzyme catalyses Zn(2+)(in) = Zn(2+)(out). Its function is as follows. Transporter for the divalent cation Zn(2+). Mediates the influx of Zn(2+) into cells from extracellular space. Controls Zn(2+) accumulation into dentate gyrus granule cells in the hippocampus. Mediates Zn(2+) reuptake from the secreted milk within the alveolar lumen. The sequence is that of Zinc transporter ZIP3 (Slc39a3) from Rattus norvegicus (Rat).